The sequence spans 498 residues: ATP synthase subunit beta, chloroplastic (498 aa).

172 to 179 (GGAGVGKT) contacts ATP.

It belongs to the ATPase alpha/beta chains family. In terms of assembly, F-type ATPases have 2 components, CF(1) - the catalytic core - and CF(0) - the membrane proton channel. CF(1) has five subunits: alpha(3), beta(3), gamma(1), delta(1), epsilon(1). CF(0) has four main subunits: a(1), b(1), b'(1) and c(9-12).

The protein localises to the plastid. Its subcellular location is the chloroplast thylakoid membrane. The enzyme catalyses ATP + H2O + 4 H(+)(in) = ADP + phosphate + 5 H(+)(out). Produces ATP from ADP in the presence of a proton gradient across the membrane. The catalytic sites are hosted primarily by the beta subunits. The protein is ATP synthase subunit beta, chloroplastic of Morus indica (Mulberry).